A 611-amino-acid chain; its full sequence is Polyphenol oxidase 4 (611 aa).

The Cu cation site is built by H57, H82, H91, H251, H255, and H283. Residues 80 to 82 constitute a cross-link (2'-(S-cysteinyl)-histidine (Cys-His)); that stretch reads CTH. Residue H255 coordinates substrate. Residues 380–611 constitute a propeptide, removed in mature form; it reads IKKSEGGKNP…GGLGALGRIF (232 aa).

This sequence belongs to the tyrosinase family. As to quaternary structure, heterotetramer. Requires Cu(2+) as cofactor. The C-ter is probably cleaved after Gly-379 since the mature active protein is smaller than the protein encoded by the gene.

The enzyme catalyses 2 L-dopa + O2 = 2 L-dopaquinone + 2 H2O. It carries out the reaction L-tyrosine + O2 = L-dopaquinone + H2O. Copper-containing oxidase that catalyzes both the o-hydroxylation of monophenols and the subsequent oxidation of the resulting o-diphenols into reactive o-quinones, which evolve spontaneously to produce intermediates, which associate in dark brown pigments. Involved in the initial step of melanin synthesis. Melanins constitute a mechanism of defense and resistance to stress such as UV radiations, free radicals, gamma rays, dehydratation and extreme temperatures, and contribute to the fungal cell-wall resistance against hydrolytic enzymes in avoiding cellular lysis. Fungal pigments are also involved in the formation and stability of spores. The polypeptide is Polyphenol oxidase 4 (PPO4) (Agaricus bisporus (White button mushroom)).